A 294-amino-acid polypeptide reads, in one-letter code: Basic endochitinase (294 aa).

A signal peptide spans 1-24 (MNIKVSLLFILPIFLLLLTSKVKA). Positions 25-294 (GDIVVYWGQD…GYSSAIRGAV (270 aa)) constitute a GH18 domain. Intrachain disulfides connect Cys44/Cys91 and Cys74/Cys81. Residue Glu151 is the Proton donor of the active site. A disulfide bond links Cys182 and Cys211.

This sequence belongs to the glycosyl hydrolase 18 family. Chitinase class II subfamily.

The enzyme catalyses Random endo-hydrolysis of N-acetyl-beta-D-glucosaminide (1-&gt;4)-beta-linkages in chitin and chitodextrins.. Its function is as follows. This protein functions as a defense against chitin containing fungal pathogens. This Nicotiana tabacum (Common tobacco) protein is Basic endochitinase.